The sequence spans 204 residues: Golgi to ER traffic protein 1 (204 aa).

Residues 1–11 (MLTLDIDPYTI) lie on the Lumenal side of the membrane. A helical membrane pass occupies residues 12–31 (LVTSFLILAIQKLVTVIGKQ). Over 32–116 (KIQLYIWQIY…RIDSITKLAI (85 aa)) the chain is Cytoplasmic. Residues 78–113 (AKWTKINRALDKLKLEVQELNETIAGEKTRIDSITK) are a coiled coil. The chain crosses the membrane as a helical span at residues 117-137 (TLILTLPIWFLRIFCRKTALL). The Lumenal portion of the chain corresponds to 138 to 161 (YIRKGILPAYLEWWLALPFFKSGT). A helical transmembrane segment spans residues 162 to 178 (IGLTCWMFVVNSVLSNL). Residues 179–204 (IFLISFPFTQKVERPIKPKNEQKTES) lie on the Cytoplasmic side of the membrane.

This sequence belongs to the WRB/GET1 family. As to quaternary structure, component of the Golgi to ER traffic (GET) complex, which is composed of GET1, GET2 and GET3. Within the complex, GET1 and GET2 form a heterotetramer which is stabilized by phosphatidylinositol binding and which binds to the GET3 homodimer.

It is found in the endoplasmic reticulum membrane. The protein localises to the golgi apparatus membrane. Functionally, required for the post-translational delivery of tail-anchored (TA) proteins to the endoplasmic reticulum. Together with GET2, acts as a membrane receptor for soluble GET3, which recognizes and selectively binds the transmembrane domain of TA proteins in the cytosol. The GET complex cooperates with the HDEL receptor ERD2 to mediate the ATP-dependent retrieval of resident ER proteins that contain a C-terminal H-D-E-L retention signal from the Golgi to the ER. This Lodderomyces elongisporus (strain ATCC 11503 / CBS 2605 / JCM 1781 / NBRC 1676 / NRRL YB-4239) (Yeast) protein is Golgi to ER traffic protein 1.